A 214-amino-acid polypeptide reads, in one-letter code: Cytochrome c biogenesis ATP-binding export protein CcmA (214 aa).

Positions 4–214 (LAVDQLTVSR…FDHGFDGAFL (211 aa)) constitute an ABC transporter domain. Position 36–43 (36–43 (GPNGIGKT)) interacts with ATP.

This sequence belongs to the ABC transporter superfamily. CcmA exporter (TC 3.A.1.107) family. In terms of assembly, the complex is composed of two ATP-binding proteins (CcmA) and two transmembrane proteins (CcmB).

The protein resides in the cell inner membrane. The catalysed reaction is heme b(in) + ATP + H2O = heme b(out) + ADP + phosphate + H(+). Its function is as follows. Part of the ABC transporter complex CcmAB involved in the biogenesis of c-type cytochromes; once thought to export heme, this seems not to be the case, but its exact role is uncertain. Responsible for energy coupling to the transport system. This chain is Cytochrome c biogenesis ATP-binding export protein CcmA, found in Rhodobacter capsulatus (strain ATCC BAA-309 / NBRC 16581 / SB1003).